The chain runs to 184 residues: MSSRSTWALLRLPLPLIRICSGKWGLRLQEKPALLFPGMAASTVQVAGRKDYPALLPLNESELEEQFVKGHGPGGQATNKTSNCVVLKHVPSGIVVKCHQTRSVDQNRKIARKVLQEKVDVFYNGENSPVHKEKLEAERRKRERKKRAKETLEKKKLLKELREASQNITEKKADADGIPRGFQE.

The N-terminal 98 residues, 1–98 (MSSRSTWALL…HVPSGIVVKC (98 aa)), are a transit peptide targeting the mitochondrion. A GGQ domain region spans residues 60–124 (ESELEEQFVK…LQEKVDVFYN (65 aa)). The GGQ signature appears at 74–76 (GGQ). Q76 carries the N5-methylglutamine modification. Residues 130–178 (VHKEKLEAERRKRERKKRAKETLEKKKLLKELREASQNITEKKADADGI) are a coiled coil. The tract at residues 132 to 184 (KEKLEAERRKRERKKRAKETLEKKKLLKELREASQNITEKKADADGIPRGFQE) is disordered. The segment covering 149–184 (KETLEKKKLLKELREASQNITEKKADADGIPRGFQE) has biased composition (basic and acidic residues).

It belongs to the prokaryotic/mitochondrial release factor family. Interacts (via C-terminus) with MTRES1 (via S4 domain). Associates with mitoribosomal S39 large subunit, peptidyl tRNA and nascent chain. Post-translationally, methylation of glutamine in the GGQ triplet by HEMK1.

It localises to the mitochondrion. Part of a mitoribosome-associated quality control pathway that prevents aberrant translation by responding to interruptions during elongation. As heterodimer with MTRES1, ejects the unfinished nascent chain and peptidyl transfer RNA (tRNA), respectively, from stalled ribosomes. Recruitment of mitoribosome biogenesis factors to these quality control intermediates suggests additional roles for MTRES1 and MTRF during mitoribosome rescue. In Mus musculus (Mouse), this protein is Mitochondrial translation release factor in rescue.